A 369-amino-acid polypeptide reads, in one-letter code: tRNA(Met) cytidine acetate ligase (369 aa).

Residues 7–20 (VAEFNPFHNGHKYL), Gly-96, Asn-152, and Arg-175 contribute to the ATP site.

The protein belongs to the TmcAL family.

The protein resides in the cytoplasm. It catalyses the reaction cytidine(34) in elongator tRNA(Met) + acetate + ATP = N(4)-acetylcytidine(34) in elongator tRNA(Met) + AMP + diphosphate. Catalyzes the formation of N(4)-acetylcytidine (ac(4)C) at the wobble position of elongator tRNA(Met), using acetate and ATP as substrates. First activates an acetate ion to form acetyladenylate (Ac-AMP) and then transfers the acetyl group to tRNA to form ac(4)C34. The chain is tRNA(Met) cytidine acetate ligase from Streptococcus agalactiae serotype Ia (strain ATCC 27591 / A909 / CDC SS700).